Here is a 137-residue protein sequence, read N- to C-terminus: Small ribosomal subunit protein uS9 (137 aa).

The tract at residues 105-137 (LKTEGYLKRDPRAVERKKYGLRKARKAPQYSKR) is disordered. A compositionally biased stretch (basic and acidic residues) spans 109–122 (GYLKRDPRAVERKK). Residues 123–137 (YGLRKARKAPQYSKR) are compositionally biased toward basic residues.

The protein belongs to the universal ribosomal protein uS9 family.

This Synechococcus sp. (strain JA-3-3Ab) (Cyanobacteria bacterium Yellowstone A-Prime) protein is Small ribosomal subunit protein uS9.